We begin with the raw amino-acid sequence, 360 residues long: mRNA cap guanine-N(7) methyltransferase (360 aa).

Positions 1–62 are disordered; it reads MSSSNSRVHE…NRHENNGNAQ (62 aa). Positions 7–19 are enriched in basic and acidic residues; the sequence is RVHEEQPPTENRR. An mRNA cap 0 methyltransferase domain is found at 83 to 358; that stretch reads SPIIQLKRFN…FYLAFAFEKR (276 aa). 92–93 serves as a coordination point for mRNA; the sequence is NN. 6 residues coordinate S-adenosyl-L-methionine: lysine 96, glycine 118, aspartate 140, aspartate 168, glutamine 191, and tyrosine 196.

Belongs to the class I-like SAM-binding methyltransferase superfamily. mRNA cap 0 methyltransferase family. As to quaternary structure, interacts with cdk9.

It localises to the nucleus. The catalysed reaction is a 5'-end (5'-triphosphoguanosine)-ribonucleoside in mRNA + S-adenosyl-L-methionine = a 5'-end (N(7)-methyl 5'-triphosphoguanosine)-ribonucleoside in mRNA + S-adenosyl-L-homocysteine. In terms of biological role, responsible for methylating the 5'-cap structure of mRNAs. This Schizosaccharomyces pombe (strain 972 / ATCC 24843) (Fission yeast) protein is mRNA cap guanine-N(7) methyltransferase (pcm1).